A 690-amino-acid polypeptide reads, in one-letter code: Eukaryotic translation initiation factor 3 subunit B (690 aa).

Over residues 1-11 the composition is skewed to basic and acidic residues; sequence MAKKKSEEHSG. Positions 1–36 are disordered; it reads MAKKKSEEHSGADANDSDYTEEPNFDDPPNFVDNIS. Acidic residues predominate over residues 15–25; sequence NDSDYTEEPNF. The RRM domain occupies 57 to 141; sequence SVVVVDNMPK…YTFAVNLFTD (85 aa). WD repeat units lie at residues 207 to 246, 292 to 331, 334 to 369, 442 to 484, and 530 to 575; these read TRER…KIQK, GDGM…LLDL, IKIP…TLME, EIRE…KPSL, and PDHF…IRRT. The stretch at 614–645 forms a coiled coil; sequence QKDRLRLTRASKELLEKRSQLRETFMEYRNKR.

It belongs to the eIF-3 subunit B family. As to quaternary structure, component of the eukaryotic translation initiation factor 3 (eIF-3) complex. The eIF-3 complex interacts with pix. Interacts with mxt.

It localises to the cytoplasm. Its function is as follows. RNA-binding component of the eukaryotic translation initiation factor 3 (eIF-3) complex, which is involved in protein synthesis of a specialized repertoire of mRNAs and, together with other initiation factors, stimulates binding of mRNA and methionyl-tRNAi to the 40S ribosome. The eIF-3 complex specifically targets and initiates translation of a subset of mRNAs involved in cell proliferation. This Drosophila virilis (Fruit fly) protein is Eukaryotic translation initiation factor 3 subunit B.